A 260-amino-acid chain; its full sequence is DNA repair protein RecO (260 aa).

A disordered region spans residues 239 to 260 (SAGVAAARKAGGDGSDGDEGEQ).

Belongs to the RecO family.

In terms of biological role, involved in DNA repair and RecF pathway recombination. The protein is DNA repair protein RecO of Sodalis glossinidius (strain morsitans).